Consider the following 301-residue polypeptide: Structure-specific endonuclease subunit SLX1 (301 aa).

A GIY-YIG domain is found at 12 to 95; sequence AFYCCYLLRS…QHPYQTRFIK (84 aa). The segment at 216-283 adopts an SLX1-type zinc-finger fold; it reads CAICEKIVDY…IPTSGQCPNC (68 aa).

The protein belongs to the SLX1 family. Forms a heterodimer with SLX4. It depends on a divalent metal cation as a cofactor.

The protein localises to the nucleus. Functionally, catalytic subunit of the SLX1-SLX4 structure-specific endonuclease that resolves DNA secondary structures generated during DNA repair and recombination. Has endonuclease activity towards branched DNA substrates, introducing single-strand cuts in duplex DNA close to junctions with ss-DNA. In Eremothecium gossypii (strain ATCC 10895 / CBS 109.51 / FGSC 9923 / NRRL Y-1056) (Yeast), this protein is Structure-specific endonuclease subunit SLX1.